The sequence spans 270 residues: Interleukin-33 (270 aa).

The tract at residues 1 to 65 (MKPKMKYSTN…EACYFRRETT (65 aa)) is homeodomain-like HTH domain. Residues 1–94 (MKPKMKYSTN…CQQQSTVESF (94 aa)) constitute a propeptide that is removed on maturation. The interval 64–111 (TTKRPSLKTDRKHKRHLVLAACQQQSTVESFAFGISGVQKYTRALHDS) is interaction with RELA.

Belongs to the IL-1 family. Highly divergent. As to quaternary structure, forms a 1:1:1 heterotrimeric complex with its primary high-affinity receptor IL1RL1 and the coreceptor IL1RAP. Interacts with cargo receptor TMED10; the interaction mediates the translocation from the cytoplasm into the ERGIC (endoplasmic reticulum-Golgi intermediate compartment) and thereby secretion. In terms of processing, the full-length protein can be released from cells and is able to signal via the IL1RL1/ST2 receptor. However, proteolytic processing by CELA1, CSTG/cathepsin G and ELANE/neutrophil elastase produces C-terminal peptides that are more active than the unprocessed full-length protein. May also be proteolytically processed by calpains. Proteolytic cleavage mediated by apoptotic caspases including CASP3 and CASP7 results in IL33 inactivation. In vitro proteolytic cleavage by CASP1 was reported but could not be confirmed in vivo suggesting that IL33 is probably not a direct substrate for that caspase.

The protein localises to the nucleus. It localises to the chromosome. It is found in the cytoplasm. The protein resides in the cytoplasmic vesicle. Its subcellular location is the secretory vesicle. The protein localises to the secreted. In terms of biological role, cytokine that binds to and signals through the IL1RL1/ST2 receptor which in turn activates NF-kappa-B and MAPK signaling pathways in target cells. Involved in the maturation of Th2 cells inducing the secretion of T-helper type 2-associated cytokines. Also involved in activation of mast cells, basophils, eosinophils and natural killer cells. Acts as a chemoattractant for Th2 cells, and may function as an 'alarmin', that amplifies immune responses during tissue injury. Induces rapid UCP2-dependent mitochondrial rewiring that attenuates the generation of reactive oxygen species and preserves the integrity of Krebs cycle required for persistent production of itaconate and subsequent GATA3-dependent differentiation of inflammation-resolving alternatively activated macrophages. Functionally, in quiescent endothelia the uncleaved form is constitutively and abundantly expressed, and acts as a chromatin-associated nuclear factor with transcriptional repressor properties, it may sequester nuclear NF-kappaB/RELA, lowering expression of its targets. This form is rapidely lost upon angiogenic or pro-inflammatory activation. The chain is Interleukin-33 (IL33) from Pongo abelii (Sumatran orangutan).